We begin with the raw amino-acid sequence, 212 residues long: Pyrrolidone-carboxylate peptidase (212 aa).

Active-site residues include E78, C141, and H165.

The protein belongs to the peptidase C15 family. As to quaternary structure, homotetramer.

Its subcellular location is the cytoplasm. The catalysed reaction is Release of an N-terminal pyroglutamyl group from a polypeptide, the second amino acid generally not being Pro.. Its function is as follows. Removes 5-oxoproline from various penultimate amino acid residues except L-proline. The polypeptide is Pyrrolidone-carboxylate peptidase (pcp) (Staphylococcus aureus).